The chain runs to 224 residues: UPF0758 protein CBUD_1789 (224 aa).

The MPN domain maps to 102-224 (QLGCTQDAQQ…SFSFAESGLL (123 aa)). Residues His-173, His-175, and Asp-186 each contribute to the Zn(2+) site. The short motif at 173–186 (HNHPSGVPDPSQAD) is the JAMM motif element.

It belongs to the UPF0758 family.

The protein is UPF0758 protein CBUD_1789 of Coxiella burnetii (strain Dugway 5J108-111).